We begin with the raw amino-acid sequence, 700 residues long: Dipeptidyl aminopeptidase 1 (700 aa).

The N-terminal stretch at 1 to 27 is a signal peptide; the sequence is MAKRIFSVSFLLVLLNVLHICIKFSVA. Asparagine 52, asparagine 144, asparagine 265, asparagine 337, and asparagine 373 each carry an N-linked (GlcNAc...) asparagine glycan. A propeptide spanning residues 210–369 is cleaved from the precursor; that stretch reads DNVNEIKHLD…SPKRELEINE (160 aa). 2 disulfide bridges follow: cysteine 395–cysteine 446 and cysteine 439–cysteine 478. The active site involves cysteine 398. Threonine 416 carries the post-translational modification Sulfothreonine. Chloride is bound by residues phenylalanine 450 and tyrosine 452. Asparagine 481, asparagine 490, and asparagine 507 each carry an N-linked (GlcNAc...) asparagine glycan. Residue tyrosine 549 participates in chloride binding. An N-linked (GlcNAc...) asparagine glycan is attached at asparagine 615. Catalysis depends on residues histidine 624 and asparagine 648. N-linked (GlcNAc...) asparagine glycosylation occurs at asparagine 667.

Belongs to the peptidase C1 family. As to quaternary structure, monomer. Requires chloride as cofactor.

Its subcellular location is the vacuole lumen. It is found in the parasitophorous vacuole lumen. The enzyme catalyses Release of an N-terminal dipeptide, Xaa-Yaa-|-Zaa-, except when Xaa is Arg or Lys, or Yaa or Zaa is Pro.. Its function is as follows. Thiol protease that cleaves dipeptides from the N-terminus of protein substrates. Active against a broad range of dipeptide substrates composed of both polar and hydrophobic amino acids. Proline cannot occupy the P1 position and arginine or lysine cannot occupy the P2 position of the substrate. Involved in host hemoglobin degradation by generating dipeptides from hemoglobin-derived oligopeptides. This chain is Dipeptidyl aminopeptidase 1, found in Plasmodium falciparum (isolate 3D7).